Consider the following 185-residue polypeptide: Photosystem I assembly protein Ycf4 (185 aa).

Helical transmembrane passes span 22 to 42 (FFFA…GFSS), 57 to 77 (ILFV…LFFS), and 101 to 121 (FYVF…LRVP).

It belongs to the Ycf4 family.

It localises to the plastid. The protein localises to the chloroplast thylakoid membrane. Functionally, seems to be required for the assembly of the photosystem I complex. This chain is Photosystem I assembly protein Ycf4, found in Gnetum parvifolium (Small-leaved jointfir).